The primary structure comprises 619 residues: Trihelix transcription factor GTL2 (619 aa).

Disordered stretches follow at residues 11–41 (HRFI…VSFS) and 62–100 (HHHH…HHHH). Residues 16 to 27 (SPPPPPPLPPHQ) show a composition bias toward pro residues. Positions 102 to 154 (PWCSDEVLALLRFRSTVENWFPEFTWEHTSRKLAEVGFKRSPQECKEKFEEEE) constitute a Myb-like 1 domain. Residues 307 to 361 (VRNMIAQQEEMHKKLLEDMVKKEEEKIAREEAWKKQEIERVNKEVEIRAQEQAMA) are a coiled coil. Disordered regions lie at residues 382 to 414 (VVQN…SSLL) and 434 to 458 (STKT…DLGK). A compositionally biased stretch (polar residues) spans 384 to 396 (QNPTSPSQDSSSL). Low complexity predominate over residues 435 to 444 (TKTLKPKNQN). Positions 448-458 (PKSDDKSDLGK) are enriched in basic and acidic residues. The 68-residue stretch at 459 to 526 (RWPKDEVLAL…RCKEKWENIN (68 aa)) folds into the Myb-like 2 domain. A Nuclear localization signal motif is present at residues 503-510 (SKKMLEIG). The disordered stretch occupies residues 557-619 (SQPPTGTTAT…VQFSGFDLEF (63 aa)). Positions 561–574 (TGTTATTATTATSA) are enriched in low complexity. A compositionally biased stretch (basic and acidic residues) spans 575-585 (RDLDTRPEENR).

Its subcellular location is the nucleus. Functionally, probable transcription factor that binds specific DNA sequence. In Arabidopsis thaliana (Mouse-ear cress), this protein is Trihelix transcription factor GTL2.